A 188-amino-acid polypeptide reads, in one-letter code: Apolipoprotein M (188 aa).

Residues 1 to 22 (MFHQIWAALLYFYGIILNSIYQ) constitute a signal peptide (not cleaved). Cystine bridges form between Cys23–Cys167, Cys95–Cys183, and Cys128–Cys157. Asn135 carries N-linked (GlcNAc...) asparagine glycosylation. Residues Glu136 and Arg143 each contribute to the tetradecanoate site.

The protein belongs to the calycin superfamily. Lipocalin family. Highly divergent. In terms of assembly, interacts with LRP2; LRP2 mediates APOM renal uptake and subsequent lysosomal degradation.

Its subcellular location is the secreted. Its function is as follows. Probably involved in lipid transport. Can bind sphingosine-1-phosphate, myristic acid, palmitic acid and stearic acid, retinol, all-trans-retinoic acid and 9-cis-retinoic acid. The polypeptide is Apolipoprotein M (APOM) (Pongo abelii (Sumatran orangutan)).